The chain runs to 259 residues: Global transcriptional regulator CodY (259 aa).

The segment at 1-155 (MSLLSRMRKI…GATVVGMEIL (155 aa)) is GAF domain. A DNA-binding region (H-T-H motif) is located at residues 203-222 (ASKIADRVGITRSVIVNALR). Ser215 bears the Phosphoserine mark.

This sequence belongs to the CodY family.

The protein localises to the cytoplasm. Its function is as follows. DNA-binding global transcriptional regulator which is involved in the adaptive response to starvation and acts by directly or indirectly controlling the expression of numerous genes in response to nutrient availability. During rapid exponential growth, CodY is highly active and represses genes whose products allow adaptation to nutrient depletion. This is Global transcriptional regulator CodY from Halalkalibacterium halodurans (strain ATCC BAA-125 / DSM 18197 / FERM 7344 / JCM 9153 / C-125) (Bacillus halodurans).